The primary structure comprises 571 residues: Urease subunit alpha (571 aa).

Positions 134–571 constitute a Urease domain; the sequence is GAIDTHIHFI…LPMAQRYFLF (438 aa). Ni(2+) contacts are provided by His139, His141, and Lys222. Lys222 is modified (N6-carboxylysine). His224 contributes to the substrate binding site. The Ni(2+) site is built by His251 and His277. His325 acts as the Proton donor in catalysis. Asp365 lines the Ni(2+) pocket.

It belongs to the metallo-dependent hydrolases superfamily. Urease alpha subunit family. In terms of assembly, heterotrimer of UreA (gamma), UreB (beta) and UreC (alpha) subunits. Three heterotrimers associate to form the active enzyme. The cofactor is Ni cation. Post-translationally, carboxylation allows a single lysine to coordinate two nickel ions.

The protein localises to the cytoplasm. It carries out the reaction urea + 2 H2O + H(+) = hydrogencarbonate + 2 NH4(+). It participates in nitrogen metabolism; urea degradation; CO(2) and NH(3) from urea (urease route): step 1/1. This Bordetella parapertussis (strain 12822 / ATCC BAA-587 / NCTC 13253) protein is Urease subunit alpha.